The sequence spans 283 residues: GTPase Era (283 aa).

One can recognise an Era-type G domain in the interval 7-175 (YCGHVIIVGK…KNIIKSYLPE (169 aa)). Positions 15-22 (GKANVGKS) are G1. 15-22 (GKANVGKS) contributes to the GTP binding site. The tract at residues 41-45 (NTTQS) is G2. The segment at 62 to 65 (DTPG) is G3. GTP contacts are provided by residues 62–66 (DTPGV) and 124–127 (NKID). Residues 124–127 (NKID) are G4. The tract at residues 154–156 (ISA) is G5. Residues 198–283 (IREQLILFLG…HLVLWVKDKN (86 aa)) enclose the KH type-2 domain.

The protein belongs to the TRAFAC class TrmE-Era-EngA-EngB-Septin-like GTPase superfamily. Era GTPase family. In terms of assembly, monomer.

It localises to the cytoplasm. The protein localises to the cell membrane. Its function is as follows. An essential GTPase that binds both GDP and GTP, with rapid nucleotide exchange. Plays a role in 16S rRNA processing and 30S ribosomal subunit biogenesis and possibly also in cell cycle regulation and energy metabolism. The polypeptide is GTPase Era (Buchnera aphidicola subsp. Acyrthosiphon pisum (strain Tuc7)).